The sequence spans 319 residues: Cytochrome f (319 aa).

The signal sequence occupies residues 1 to 35 (MQNRNISYWIKKCVIQSISIVILMKIIAWPSISEA). Positions 36, 56, 59, and 60 each coordinate heme. The chain crosses the membrane as a helical span at residues 285–305 (VQSLLVFFVSVTLAQIFLVLK).

This sequence belongs to the cytochrome f family. The 4 large subunits of the cytochrome b6-f complex are cytochrome b6, subunit IV (17 kDa polypeptide, petD), cytochrome f and the Rieske protein, while the 4 small subunits are PetG, PetL, PetM and PetN. The complex functions as a dimer. Requires heme as cofactor.

The protein localises to the plastid. It localises to the chloroplast thylakoid membrane. In terms of biological role, component of the cytochrome b6-f complex, which mediates electron transfer between photosystem II (PSII) and photosystem I (PSI), cyclic electron flow around PSI, and state transitions. This chain is Cytochrome f, found in Physcomitrium patens (Spreading-leaved earth moss).